We begin with the raw amino-acid sequence, 417 residues long: BSD domain-containing protein 1-B (417 aa).

Positions 153–205 (WLAYWDPEQRKAEISEPLVTSPSIRALFTKMVPAAVSHSEFWQRYFYKVHQLE) constitute a BSD domain. 3 disordered regions span residues 215-234 (KQRANQSVHSEEPKWEEEEE), 262-292 (HVEDKSEKTAELNRDHTSVTSPSESSESISP), and 323-390 (AAET…DFDM). Basic and acidic residues predominate over residues 262–278 (HVEDKSEKTAELNRDHT). Over residues 281–292 (TSPSESSESISP) the composition is skewed to low complexity. A compositionally biased stretch (polar residues) spans 332–343 (PVEQTGKSNAQM). Over residues 345-356 (THREDPPSDLRV) the composition is skewed to basic and acidic residues. The span at 360–379 (NSDSGKSTPSNNGQKGSSTD) shows a compositional bias: polar residues. Residues 380–390 (VSEDWEKDFDM) show a composition bias toward acidic residues.

The chain is BSD domain-containing protein 1-B (bsdc1-b) from Xenopus laevis (African clawed frog).